Reading from the N-terminus, the 180-residue chain is Large ribosomal subunit protein uL6 (180 aa).

The protein belongs to the universal ribosomal protein uL6 family. In terms of assembly, part of the 50S ribosomal subunit.

Functionally, this protein binds to the 23S rRNA, and is important in its secondary structure. It is located near the subunit interface in the base of the L7/L12 stalk, and near the tRNA binding site of the peptidyltransferase center. In Caldanaerobacter subterraneus subsp. tengcongensis (strain DSM 15242 / JCM 11007 / NBRC 100824 / MB4) (Thermoanaerobacter tengcongensis), this protein is Large ribosomal subunit protein uL6.